The chain runs to 213 residues: High frequency lysogenization protein HflD homolog (213 aa).

It belongs to the HflD family.

It localises to the cytoplasm. The protein localises to the cell inner membrane. The sequence is that of High frequency lysogenization protein HflD homolog from Klebsiella pneumoniae (strain 342).